The following is a 216-amino-acid chain: Adenylate kinase (216 aa).

10 to 15 provides a ligand contact to ATP; the sequence is GAGKGT. The tract at residues 30-59 is NMP; that stretch reads STGDMFRAAMKNETALGLEAKSYIDKGELV. Residues Thr31, Arg36, 57-59, 85-88, and Gln92 each bind AMP; these read ELV and GFPR. Residues 126 to 164 are LID; the sequence is GRFICRTCGATYHKLFNPPKVEGTCDRCGGHEFYQREDD. Arg127 provides a ligand contact to ATP. Positions 130 and 133 each coordinate Zn(2+). ATP is bound at residue 136–137; that stretch reads TY. Residues Cys150 and Cys153 each contribute to the Zn(2+) site. 2 residues coordinate AMP: Arg161 and Arg172. Arg200 contacts ATP.

The protein belongs to the adenylate kinase family. Monomer.

The protein resides in the cytoplasm. It carries out the reaction AMP + ATP = 2 ADP. It functions in the pathway purine metabolism; AMP biosynthesis via salvage pathway; AMP from ADP: step 1/1. Functionally, catalyzes the reversible transfer of the terminal phosphate group between ATP and AMP. Plays an important role in cellular energy homeostasis and in adenine nucleotide metabolism. This chain is Adenylate kinase, found in Enterococcus faecalis (strain ATCC 700802 / V583).